A 383-amino-acid chain; its full sequence is Corticosteroid-binding globulin (383 aa).

Residues Asn-74 and Asn-154 are each glycosylated (N-linked (GlcNAc...) asparagine). A cortisol-binding site is contributed by Gln-232. N-linked (GlcNAc...) asparagine glycosylation occurs at Asn-238. Gln-264 serves as a coordination point for cortisol. N-linked (GlcNAc...) asparagine glycosylation is present at Asn-308. Residue Trp-371 participates in cortisol binding.

Belongs to the serpin family. In terms of tissue distribution, produced and secreted by hepatocytes, but has also been identified in a number of glycocorticoid responsive cells (it is found in maternal lung, spleen, and ovary and fetal kidney).

Its subcellular location is the secreted. Major transport protein for glucocorticoids and progestins in the blood of almost all vertebrate species. In Oryctolagus cuniculus (Rabbit), this protein is Corticosteroid-binding globulin (SERPINA6).